A 102-amino-acid chain; its full sequence is UPF0751 protein DSY4013 (102 aa).

This sequence belongs to the UPF0751 family.

In Desulfitobacterium hafniense (strain Y51), this protein is UPF0751 protein DSY4013.